A 283-amino-acid polypeptide reads, in one-letter code: MRTQWPSPAKLNLFLYITGQRADGYHTLQTLFQFLDYGDTISIELRDDGDIRLLTPVEGVEHEDNLIVRAARLLIKTAADSGRLPTGSGANISIDKRLPMGGGLGGGSSNAATVLVALNYLWQCGLSMDELAEMGLTLGADVPVFVRGHAAFAEGVGEILTPVDPPEKWYLVAHPGVSIPTPVIFKDPELPRNTPKRSIETLLKCEFSNDCEVIARKRFREVDAVLSWLLEYAPSRLTGTGACVFAEFDTESEARQVLEQAPEWLNGFVAKGVNLSPLHRAML.

Lys10 is an active-site residue. 99 to 109 (PMGGGLGGGSS) contributes to the ATP binding site. Residue Asp141 is part of the active site.

Belongs to the GHMP kinase family. IspE subfamily. As to quaternary structure, homodimer.

It catalyses the reaction 4-CDP-2-C-methyl-D-erythritol + ATP = 4-CDP-2-C-methyl-D-erythritol 2-phosphate + ADP + H(+). It participates in isoprenoid biosynthesis; isopentenyl diphosphate biosynthesis via DXP pathway; isopentenyl diphosphate from 1-deoxy-D-xylulose 5-phosphate: step 3/6. Catalyzes the phosphorylation of the position 2 hydroxy group of 4-diphosphocytidyl-2C-methyl-D-erythritol. The protein is 4-diphosphocytidyl-2-C-methyl-D-erythritol kinase of Escherichia coli (strain 55989 / EAEC).